The following is a 659-amino-acid chain: Protein phosphatase Slingshot homolog 3 (659 aa).

The segment covering 1–16 has biased composition (polar residues); the sequence is MALVTVSRSPPGSGAS. The tract at residues 1-31 is disordered; it reads MALVTVSRSPPGSGASTPVGPWDQAVQRRSR. Ala2 is modified (N-acetylalanine). Phosphoserine is present on residues Ser9 and Ser37. The interval 46-96 is disordered; it reads LGLQDGGDNDDAAEASSEPTEKAPSEEELHGDQTDFGQGSQSPQKQEEQRQ. The segment covering 64–78 has biased composition (basic and acidic residues); that stretch reads PTEKAPSEEELHGDQ. Residues 80-89 are compositionally biased toward polar residues; it reads DFGQGSQSPQ. Phosphoserine occurs at positions 85 and 87. One can recognise a DEK-C domain in the interval 269-324; the sequence is EQMEQAIRAELWKVLDVSDLESVTSKEIRQALELRLGLPLQQYRDFIDNQMLLLVA. Positions 328 to 469 constitute a Tyrosine-protein phosphatase domain; sequence RASRIFPHLY…LQIYQGILTA (142 aa). The active-site Phosphocysteine intermediate is Cys413. Disordered stretches follow at residues 482 to 534, 547 to 603, and 617 to 638; these read GVSP…RINL, SLEL…RQSV, and QAFQ…ISST. Positions 547-557 are enriched in low complexity; sequence SLELESTSETS.

Belongs to the protein-tyrosine phosphatase family. As to quaternary structure, does not bind to, or colocalize with, filamentous actin.

It is found in the cytoplasm. It localises to the cytoskeleton. The protein resides in the nucleus. The enzyme catalyses O-phospho-L-tyrosyl-[protein] + H2O = L-tyrosyl-[protein] + phosphate. It catalyses the reaction O-phospho-L-seryl-[protein] + H2O = L-seryl-[protein] + phosphate. It carries out the reaction O-phospho-L-threonyl-[protein] + H2O = L-threonyl-[protein] + phosphate. Protein phosphatase which may play a role in the regulation of actin filament dynamics. Can dephosphorylate and activate the actin binding/depolymerizing factor cofilin, which subsequently binds to actin filaments and stimulates their disassembly. The protein is Protein phosphatase Slingshot homolog 3 (SSH3) of Homo sapiens (Human).